A 797-amino-acid chain; its full sequence is LPS-assembly protein LptD (797 aa).

A signal peptide spans 1 to 30; that stretch reads MKEGRKRLRAGYCYMLAGVVGVASTGSSRA.

The protein belongs to the LptD family. Component of the lipopolysaccharide transport and assembly complex. Interacts with LptE and LptA.

The protein localises to the cell outer membrane. In terms of biological role, together with LptE, is involved in the assembly of lipopolysaccharide (LPS) at the surface of the outer membrane. In Hahella chejuensis (strain KCTC 2396), this protein is LPS-assembly protein LptD.